Here is a 280-residue protein sequence, read N- to C-terminus: Shikimate dehydrogenase (NADP(+)) (280 aa).

Shikimate contacts are provided by residues 15–17 (SLS) and Thr62. Lys66 (proton acceptor) is an active-site residue. Positions 88 and 104 each coordinate shikimate. NADP(+)-binding positions include 128-132 (GAGGA), 151-156 (NRTEER), and Ile222. Shikimate is bound at residue Tyr224. Gly245 serves as a coordination point for NADP(+).

This sequence belongs to the shikimate dehydrogenase family. In terms of assembly, homodimer.

It carries out the reaction shikimate + NADP(+) = 3-dehydroshikimate + NADPH + H(+). The protein operates within metabolic intermediate biosynthesis; chorismate biosynthesis; chorismate from D-erythrose 4-phosphate and phosphoenolpyruvate: step 4/7. Functionally, involved in the biosynthesis of the chorismate, which leads to the biosynthesis of aromatic amino acids. Catalyzes the reversible NADPH linked reduction of 3-dehydroshikimate (DHSA) to yield shikimate (SA). The chain is Shikimate dehydrogenase (NADP(+)) from Methanosarcina mazei (strain ATCC BAA-159 / DSM 3647 / Goe1 / Go1 / JCM 11833 / OCM 88) (Methanosarcina frisia).